The chain runs to 846 residues: MAVGLRRSDSIADMMPEALRQSRYQMKRCFQRYVSQGKRLMKRQQLLDELDKSVDDKADKDQLLQGFLGYVISSTQEAAVLPPFVAFAVRMNPGIWEFVKVHSANLSVEQMTPSDYLKNKEALVDDKWGAYDDDSQLEVDFGALDLSTPHLTLPSSIGKGAHLVSRFMSSKLTDNKKPLLDYLLALSHRGDKLMINDILDTVDKLQTALLLAEVYVAGLHPDTNYSEFEQKFQEWGLEKGWGDTAETCKETLSSLSEVLQAPDPINMEKFFSTVPCVFTVVIFSIHGYFGQEKVLGMPDTGGQVVYILDQVRALEDELLQRIKQQGLNATPKILVLTRLIPEAKGTKCNVELEPIENTKHSNILRVPFKTEDGKVLPQWVSRFDIYPYLERYAQDSSVKILEILEGKPDLVIGNYTDGNLVASLLTSKLGVTQGTIAHALEKTKYEDSDIKWRELDHKYHFSCQFTADMIAMNTSDFIIASTYQEIAGSKEKPGQYESHYAFTMPGLCRYATGINVFDPKFNIAAPGADQSVYFPFTQKQKRLTDLHPQIEELLYSKEDNNEHIGHLADRSKPIIFSMARLDKIKNITGLVEWYGQNKRLRDLVNLVIVGGLLDPSQSKDREEIEEINKMHSLINKYQLVGQIRWIKGQTDRVRNGELYRCIADTKGAFVQPALYEAFGLTVIEAMNCGLPTFATNQGGPAEIIVDEVSGFHINPLNGKEASDKIADFFQKCKEDLIYWSKMSTAGLQRIYECYTWQIYATKVLNMASIYGFWRTLDKEERQAKQHYLHMFYNLQFRKLAKNVPTLGEQPAQPTESAEPNRIIPRPKERQVCPFLRNLLKKETGNN.

The tract at residues C276–T755 is GT-B glycosyltransferase.

Belongs to the glycosyltransferase 1 family. Plant sucrose synthase subfamily.

It carries out the reaction an NDP-alpha-D-glucose + D-fructose = a ribonucleoside 5'-diphosphate + sucrose + H(+). Functionally, sucrose-cleaving enzyme that provides UDP-glucose and fructose for various metabolic pathways. The sequence is that of Sucrose synthase 6 (SUS6) from Oryza sativa subsp. japonica (Rice).